We begin with the raw amino-acid sequence, 261 residues long: RING finger protein 208 (261 aa).

Positions 83 to 106 (PALEGAPHTPPLPRRPRKGSSELG) are disordered. Ser-102 is modified (phosphoserine). The RING-type zinc-finger motif lies at 143-190 (CPTCGHSYNVTQRRPRVLSCLHSVCEQCLQILYESCPKYKFISCPTCR).

The polypeptide is RING finger protein 208 (RNF208) (Homo sapiens (Human)).